A 65-amino-acid polypeptide reads, in one-letter code: Large ribosomal subunit protein bL33c (65 aa).

Belongs to the bacterial ribosomal protein bL33 family.

Its subcellular location is the plastid. It is found in the chloroplast. The protein is Large ribosomal subunit protein bL33c of Zygnema circumcarinatum (Green alga).